The chain runs to 432 residues: Histidine--tRNA ligase (432 aa).

This sequence belongs to the class-II aminoacyl-tRNA synthetase family. In terms of assembly, homodimer.

It localises to the cytoplasm. It carries out the reaction tRNA(His) + L-histidine + ATP = L-histidyl-tRNA(His) + AMP + diphosphate + H(+). This chain is Histidine--tRNA ligase, found in Ralstonia nicotianae (strain ATCC BAA-1114 / GMI1000) (Ralstonia solanacearum).